The chain runs to 151 residues: UPF0208 membrane protein Spro_3315 (151 aa).

The next 2 helical transmembrane spans lie at 46 to 64 and 70 to 90; these read FAVRFMPPLAVFTLTWQIA and GPAIATALFACSMPMQGLWWL.

This sequence belongs to the UPF0208 family.

Its subcellular location is the cell inner membrane. This is UPF0208 membrane protein Spro_3315 from Serratia proteamaculans (strain 568).